We begin with the raw amino-acid sequence, 477 residues long: Bifunctional protein HldE (477 aa).

The segment at 1 to 318 is ribokinase; sequence MKVNLPAFER…ENAVRGRAAT (318 aa). 195–198 is a binding site for ATP; sequence NLSE. Residue aspartate 264 is part of the active site. The cytidylyltransferase stretch occupies residues 344 to 477; it reads MTNGVFDILH…IKKIQTESEK (134 aa).

In the N-terminal section; belongs to the carbohydrate kinase PfkB family. The protein in the C-terminal section; belongs to the cytidylyltransferase family. As to quaternary structure, homodimer.

It carries out the reaction D-glycero-beta-D-manno-heptose 7-phosphate + ATP = D-glycero-beta-D-manno-heptose 1,7-bisphosphate + ADP + H(+). It catalyses the reaction D-glycero-beta-D-manno-heptose 1-phosphate + ATP + H(+) = ADP-D-glycero-beta-D-manno-heptose + diphosphate. The protein operates within nucleotide-sugar biosynthesis; ADP-L-glycero-beta-D-manno-heptose biosynthesis; ADP-L-glycero-beta-D-manno-heptose from D-glycero-beta-D-manno-heptose 7-phosphate: step 1/4. Its pathway is nucleotide-sugar biosynthesis; ADP-L-glycero-beta-D-manno-heptose biosynthesis; ADP-L-glycero-beta-D-manno-heptose from D-glycero-beta-D-manno-heptose 7-phosphate: step 3/4. Its function is as follows. Catalyzes the phosphorylation of D-glycero-D-manno-heptose 7-phosphate at the C-1 position to selectively form D-glycero-beta-D-manno-heptose-1,7-bisphosphate. Functionally, catalyzes the ADP transfer from ATP to D-glycero-beta-D-manno-heptose 1-phosphate, yielding ADP-D-glycero-beta-D-manno-heptose. In Salmonella arizonae (strain ATCC BAA-731 / CDC346-86 / RSK2980), this protein is Bifunctional protein HldE.